Reading from the N-terminus, the 1069-residue chain is MARASKREVSSDEAYSSEEEEQVNDQANVEEDDDELEAVARSAGSDEEDVAPDEAPVSDDEVVPVEDDAEEDEEDEEKAEISKREKARLKEMQKMKKQKIQQILDSQNASIDADMNNKGKGRIKYLLQQTELFAHFAKSDPSPSQKKGKGRGRHSSKLTEEEEDEECLKEEEGGIVGSGGTRLLTQPACIQGKLRDYQLAGLNWLIRLYENGINGILADEMGLGKTLQTISLLAYLHEYRGINGPHMVVAPKSTLGNWMNEIRRFCPVLRAVKFLGNPEERRHIREELLVAGKFDICVTSFEMAIKEKTTLRRFSWRYIIIDEAHRIKNENSLLSKTMRLFSTNYRLLITGTPLQNNLHELWALLNFLLPEVFSSAETFDEWFQISGENDQQEVVQQLHKVLRPFLLRRLKSDVEKGLPPKKETILKVGMSQMQKQYYKALLQKDLEVVNGGGERKRLLNIAMQLRKCCNHPYLFQGAEPGPPYTTGDHLVTNAGKMVLLDKLLPKLKDRDSRVLIFSQMTRLLDILEDYLMYRGYQYCRIDGNTGGDERDASIEAYNKPGSEKFVFLLSTRAGGLGINLATADVVILYDSDWNPQVDLQAQDRAHRIGQKKEVQVFRFCTENAIEAKVIERAYKKLALDALVIQQGRLAEQKTVNKDELLQMVRYGAEMVFSSKDSTITDEDIDRIIAKGEEATAELDAKMKKFTEDAIQFKMDDSADFYDFDDDNKDESKVDFKKIVSENWNDPPKRERKRNYSEVEYFKQTLRQGAPAKPKEPRIPRMPQLHDFQFFNIQRLTELYEKEVRYLMQAHQKTQMKDTIEVDEPEEVGDPLTAEEVEEKELLLEEGFSTWSRRDFNAFIRACEKYGRNDIKSIASEMEGKTEEEVERYAQVFQVRYKELNDYDRIIKNIERGEARISRKDEIMKAIGKKLDRYRNPWLELKIQYGQNKGKLYNEECDRFMICMVHKLGYGNWDELKAAFRTSPLFRFDWFVKSRTTQELARRCDTLIRLIEKENQEFDERERQARKEKKLSKSATPSKRPSGRQANESPSSLLKKRKQLSMDDYGKRRK.

The segment covering 1–10 (MARASKREVS) has biased composition (basic and acidic residues). Disordered stretches follow at residues 1-93 (MARA…KEMQ) and 136-168 (FAKS…EECL). 2 stretches are compositionally biased toward acidic residues: residues 15–37 (YSSE…DELE) and 45–78 (SDEE…DEEK). Residues 79–93 (AEISKREKARLKEMQ) show a composition bias toward basic and acidic residues. Basic residues predominate over residues 146–156 (KKGKGRGRHSS). A Helicase ATP-binding domain is found at 206–371 (IRLYENGING…WALLNFLLPE (166 aa)). An ATP-binding site is contributed by 219-226 (DEMGLGKT). Residues 322–325 (DEAH) carry the DEAH box motif. A Helicase C-terminal domain is found at 499–650 (LLDKLLPKLK…ALVIQQGRLA (152 aa)). SANT domains follow at residues 845–897 (EGFS…VRYK) and 946–1007 (QNKG…DTLI). Residues 1016 to 1069 (EFDERERQARKEKKLSKSATPSKRPSGRQANESPSSLLKKRKQLSMDDYGKRRK) form a disordered region. A compositionally biased stretch (polar residues) spans 1032–1051 (KSATPSKRPSGRQANESPSS). The span at 1059-1069 (LSMDDYGKRRK) shows a compositional bias: basic and acidic residues.

The protein belongs to the SNF2/RAD54 helicase family. ISWI subfamily. Interacts with RLT1. Binds to FGT1. In terms of tissue distribution, highly expressed in growing tissues such as inflorescence and flower meristems, young leaves and floral organs. Expressed in roots, rosette and cauline leaves, stems, flowers, inflorescences and siliques.

The protein localises to the nucleus. In terms of biological role, possesses intrinsic ATP-dependent nucleosome-remodeling activity. Constitutes the catalytic subunit of several complexes capable of forming ordered nucleosome arrays on chromatin. Involved in the formation of nucleosome distribution patterns. Required for the maintenance of the plant vegetative phase. In association with RLT1 or RLT2 may prevent the early activation of the vegetative-to-reproductive transition by regulating key genes that contribute to flower timing, such as FT, SEP1, SEP3, AGL8/FUL, SOC1 and FLC. Necessary to acquire heat stress (HS) memory. The protein is ISWI chromatin-remodeling complex ATPase CHR17 of Arabidopsis thaliana (Mouse-ear cress).